We begin with the raw amino-acid sequence, 1028 residues long: Exportin-T (1028 aa).

Belongs to the exportin family.

Its subcellular location is the nucleus. The protein localises to the cytoplasm. Its function is as follows. tRNA nucleus export receptor which facilitates tRNA translocation across the nuclear pore complex. Involved in pre-tRNA splicing, probably by affecting the interaction of pre-tRNA with splicing endonuclease. In Aspergillus terreus (strain NIH 2624 / FGSC A1156), this protein is Exportin-T (los1).